The sequence spans 144 residues: Leghemoglobin-1 (144 aa).

One can recognise a Globin domain in the interval 2-144 (GFTEKQEALV…DGLATAIKAA (143 aa)). Tyrosine 25 and tyrosine 30 each carry nitrated tyrosine. Serine 45 lines the heme b pocket. At serine 45 the chain carries Phosphoserine. Histidine 62 provides a ligand contact to O2. Positions 65, 93, and 96 each coordinate heme b. Tyrosine 134 carries the nitrated tyrosine modification.

It belongs to the plant globin family. In terms of assembly, monomer. Post-translationally, nitrated in effective nodules and particularly in hypoxic conditions; this mechanism may play a protective role in the symbiosis by buffering toxic peroxynitrite NO(2)(-). Nitration level decrease during nodule senescence. In terms of processing, phosphorylation at Ser-45 disrupts the molecular environment of its porphyrin ring oxygen binding pocket, thus leading to a reduced oxygen consumption and to the delivery of oxygen O(2) to symbiosomes. As to expression, root nodules.

The protein localises to the cytoplasm. It is found in the cytosol. The protein resides in the nucleus. In terms of biological role, leghemoglobin that reversibly binds oxygen O(2) through a pentacoordinated heme iron. In root nodules, facilitates the diffusion of oxygen to the bacteroids while preventing the bacterial nitrogenase from being inactivated by buffering dioxygen, nitric oxide and carbon monoxide, and promoting the formation of reactive oxygen species (ROS, e.g. H(2)O(2)). This role is essential for symbiotic nitrogen fixation (SNF). This chain is Leghemoglobin-1, found in Vicia faba (Broad bean).